Here is a 44-residue protein sequence, read N- to C-terminus: Thymosin beta-4 (44 aa).

A compositionally biased stretch (basic and acidic residues) spans 1–25; the sequence is MADKPDMAEIEKFDKSKLKKTETQE. A disordered region spans residues 1–44; the sequence is MADKPDMAEIEKFDKSKLKKTETQEKNPLPSKETIEQEKQAGES. At A2 the chain carries N-acetylalanine. An N6-acetyllysine modification is found at K4. K12 carries the post-translational modification N6-acetyllysine; alternate. K12 participates in a covalent cross-link: Glycyl lysine isopeptide (Lys-Gly) (interchain with G-Cter in SUMO2); alternate. T23 bears the Phosphothreonine mark. K26 bears the N6-acetyllysine mark. S31 is modified (phosphoserine). Position 32 is an N6-acetyllysine (K32). Residues 33–44 are compositionally biased toward basic and acidic residues; sequence ETIEQEKQAGES. T34 carries the phosphothreonine modification. K39 carries the N6-acetyllysine modification.

This sequence belongs to the thymosin beta family. Originally found in thymus but it is widely distributed in many tissues.

It is found in the cytoplasm. It localises to the cytoskeleton. Plays an important role in the organization of the cytoskeleton. Binds to and sequesters actin monomers (G actin) and therefore inhibits actin polymerization. Its function is as follows. Seraspenide inhibits the entry of hematopoietic pluripotent stem cells into the S-phase. The sequence is that of Thymosin beta-4 (TMSB4) from Oryctolagus cuniculus (Rabbit).